The sequence spans 376 residues: Probable cysteine protease RDL3 (376 aa).

Positions 1 to 27 (MAISFRTLALLTLSVLLISISLGVVTA) are cleaved as a signal peptide. Positions 28–126 (TESQRNEGEV…ERYQYKEGDV (99 aa)) are cleaved as a propeptide — activation peptide. N80 carries N-linked (GlcNAc...) asparagine glycosylation. 2 disulfide bridges follow: C149–C192 and C183–C226. C152 is a catalytic residue. N-linked (GlcNAc...) asparagine glycosylation is present at N270. An intrachain disulfide couples C283 to C336. Catalysis depends on residues H290 and N311. N-linked (GlcNAc...) asparagine glycosylation occurs at N349.

It belongs to the peptidase C1 family. In terms of tissue distribution, expressed in root hairs.

Its function is as follows. Probable thiol protease. The polypeptide is Probable cysteine protease RDL3 (Arabidopsis thaliana (Mouse-ear cress)).